Here is a 137-residue protein sequence, read N- to C-terminus: Small ribosomal subunit protein uS11A (137 aa).

S2 bears the N-acetylserine mark. The interval D117–L137 is disordered. Positions K128–L137 are enriched in basic residues.

It belongs to the universal ribosomal protein uS11 family. In terms of assembly, component of the small ribosomal subunit (SSU). Mature yeast ribosomes consist of a small (40S) and a large (60S) subunit. The 40S small subunit contains 1 molecule of ribosomal RNA (18S rRNA) and 33 different proteins (encoded by 57 genes). The large 60S subunit contains 3 rRNA molecules (25S, 5.8S and 5S rRNA) and 46 different proteins (encoded by 81 genes). uS11 interacts with eS1 forming part of the mRNA exit tunnel. uS11 interacts with snoRNA U3. uS11 interacts with MPP10. Component of the ribosomal small subunit (SSU) processome composed of at least 40 protein subunits and snoRNA U3. Post-translationally, N-terminally acetylated by acetyltransferase NatA.

It localises to the cytoplasm. Its subcellular location is the nucleus. The protein resides in the nucleolus. Functionally, component of the ribosome, a large ribonucleoprotein complex responsible for the synthesis of proteins in the cell. The small ribosomal subunit (SSU) binds messenger RNAs (mRNAs) and translates the encoded message by selecting cognate aminoacyl-transfer RNA (tRNA) molecules. The large subunit (LSU) contains the ribosomal catalytic site termed the peptidyl transferase center (PTC), which catalyzes the formation of peptide bonds, thereby polymerizing the amino acids delivered by tRNAs into a polypeptide chain. The nascent polypeptides leave the ribosome through a tunnel in the LSU and interact with protein factors that function in enzymatic processing, targeting, and the membrane insertion of nascent chains at the exit of the ribosomal tunnel. uS11 is involved in nucleolar processing of pre-18S ribosomal RNA and ribosome assembly. The polypeptide is Small ribosomal subunit protein uS11A (Saccharomyces cerevisiae (strain ATCC 204508 / S288c) (Baker's yeast)).